Consider the following 233-residue polypeptide: H-2 class II histocompatibility antigen, A-F alpha chain (233 aa).

Residues 1-88 are alpha-1; sequence EDDIEADHVG…KRSNFTPATN (88 aa). At 1–195 the chain is on the extracellular side; sequence EDDIEADHVG…IPAPMSELTE (195 aa). The interval 89–182 is alpha-2; that stretch reads EAPQATVFPK…GLEEPVLKHW (94 aa). The region spanning 91–183 is the Ig-like C1-type domain; sequence PQATVFPKSP…LEEPVLKHWE (93 aa). Cys111 and Cys167 are disulfide-bonded. Residue Asn122 is glycosylated (N-linked (GlcNAc...) asparagine). Residues 183 to 195 are connecting peptide; that stretch reads EPEIPAPMSELTE. A helical membrane pass occupies residues 196–221; the sequence is TVVCALGLSVGLVGIVVGTIFIIQGL. The Cytoplasmic portion of the chain corresponds to 222–233; that stretch reads RSGGTSRHPGPL.

This sequence belongs to the MHC class II family.

It is found in the membrane. The chain is H-2 class II histocompatibility antigen, A-F alpha chain (H2-Aa) from Mus musculus (Mouse).